Here is a 34-residue protein sequence, read N- to C-terminus: Tau-theraphotoxin-Pc1c (34 aa).

Intrachain disulfides connect C2/C16, C9/C21, and C15/C28. Phenylalanine amide is present on F34.

This sequence belongs to the neurotoxin 10 (Hwtx-1) family. 62 (Vatx) subfamily. As to expression, expressed by the venom gland.

It localises to the secreted. Selectively activates mammalian TRPV1, or capsaicin receptor, a non-selective cation channel expressed by sensory neurons of the pain pathway. Is more potent than VaTx1 and VaTx2. Interacts with distinct regions of the channel than capsaicin, since it only acts on the extracellular face of the channel, and capsaicin binds to the cytosolic side. Also activates avian TRPV1, which is insensitive to capsaicin. In mice, elicits pain-related behaviors, such as licking and flinching of the affected limb. The paw of toxin-injected mice shows substantial edema. The chain is Tau-theraphotoxin-Pc1c from Psalmopoeus cambridgei (Trinidad chevron tarantula).